Consider the following 69-residue polypeptide: Protein transport protein Sec61 subunit gamma-1 (69 aa).

Residue Met1 is modified to N-acetylmethionine. The Cytoplasmic portion of the chain corresponds to 1–32; it reads MDAIDSVVDPLRDFAKDSIRLVKRCHKPDRKE. The helical transmembrane segment at 33 to 61 threads the bilayer; sequence FTKVAVRTAIGFVVMGFVGFFVKLIFIPI. The Extracellular segment spans residues 62–69; the sequence is NNIIVGAT.

Belongs to the SecE/SEC61-gamma family. In terms of assembly, heterotrimeric complex composed of SEC61-alpha, SEC61-beta and SEC61-gamma.

The protein resides in the endoplasmic reticulum membrane. Its function is as follows. Necessary for protein translocation in the endoplasmic reticulum. The sequence is that of Protein transport protein Sec61 subunit gamma-1 (SEC61G1) from Arabidopsis thaliana (Mouse-ear cress).